The following is a 200-amino-acid chain: Translation machinery-associated protein 22 (200 aa).

In terms of domain architecture, SUI1 spans 95-166 (VVIRREARTK…EVEAYIHSLL (72 aa)).

Belongs to the DENR family. In terms of assembly, interacts with the 40S ribosomal subunit.

The protein resides in the cytoplasm. This Kluyveromyces lactis (strain ATCC 8585 / CBS 2359 / DSM 70799 / NBRC 1267 / NRRL Y-1140 / WM37) (Yeast) protein is Translation machinery-associated protein 22 (TMA22).